The primary structure comprises 1003 residues: Glycine--tRNA ligase (1003 aa).

Residues 1–310 are glycine--tRNA ligase alpha subunit; the sequence is MSSQPLTLQA…VTPKKIPTIC (310 aa). Residues 311–1003 form a glycine--tRNA ligase beta subunit region; sequence QPEDFLLEIG…CFGFYAWDVL (693 aa).

The protein belongs to the class-II aminoacyl-tRNA synthetase family.

It localises to the cytoplasm. It catalyses the reaction tRNA(Gly) + glycine + ATP = glycyl-tRNA(Gly) + AMP + diphosphate. The sequence is that of Glycine--tRNA ligase (glyQS) from Chlamydia trachomatis serovar L2 (strain ATCC VR-902B / DSM 19102 / 434/Bu).